The chain runs to 230 residues: NAD(P)H-hydrate epimerase (230 aa).

The 213-residue stretch at 11 to 223 (YAAADIRAAE…DVGLDLSGAT (213 aa)) folds into the YjeF N-terminal domain. Position 59–63 (59–63 (NNGGD)) interacts with (6S)-NADPHX. 2 residues coordinate K(+): asparagine 60 and aspartate 125. (6S)-NADPHX is bound by residues 129–137 (GIGTTDSPA) and aspartate 165. Serine 168 contributes to the K(+) binding site.

The protein belongs to the NnrE/AIBP family. K(+) is required as a cofactor.

The enzyme catalyses (6R)-NADHX = (6S)-NADHX. The catalysed reaction is (6R)-NADPHX = (6S)-NADPHX. In terms of biological role, catalyzes the epimerization of the S- and R-forms of NAD(P)HX, a damaged form of NAD(P)H that is a result of enzymatic or heat-dependent hydration. This is a prerequisite for the S-specific NAD(P)H-hydrate dehydratase to allow the repair of both epimers of NAD(P)HX. This Clavibacter michiganensis subsp. michiganensis (strain NCPPB 382) protein is NAD(P)H-hydrate epimerase.